The primary structure comprises 226 residues: 7-cyano-7-deazaguanine synthase (226 aa).

Position 10 to 20 (10 to 20) interacts with ATP; that stretch reads LSGGLDSATAA. C191, C199, C202, and C205 together coordinate Zn(2+).

The protein belongs to the QueC family. It depends on Zn(2+) as a cofactor.

It carries out the reaction 7-carboxy-7-deazaguanine + NH4(+) + ATP = 7-cyano-7-deazaguanine + ADP + phosphate + H2O + H(+). It participates in purine metabolism; 7-cyano-7-deazaguanine biosynthesis. In terms of biological role, catalyzes the ATP-dependent conversion of 7-carboxy-7-deazaguanine (CDG) to 7-cyano-7-deazaguanine (preQ(0)). This is 7-cyano-7-deazaguanine synthase from Parasynechococcus marenigrum (strain WH8102).